Consider the following 301-residue polypeptide: Tegument protein VP22 (301 aa).

A disordered region spans residues 1–171 (MTSRRSVKSG…PTRSKTPAQG (171 aa)). Over residues 113–124 (RTPTTAPRAPRT) the composition is skewed to low complexity. The short motif at 163–166 (TRSK) is the Nuclear localization signal element. Positions 174 to 267 (RKLHFSTAPP…LVNPDVVQDV (94 aa)) are interaction with gE. A Nuclear export signal motif is present at residues 232 to 244 (LNELLGITTIRVT). A compositionally biased stretch (low complexity) spans 269-281 (AATATRGRSAASR). The segment at 269–301 (AATATRGRSAASRPTERPRAPARSASRPRRPVE) is disordered.

This sequence belongs to the alphaherpesvirinae VP22 tegument protein family. Interacts with gE (via C-terminus); this interaction is necessary for the recruitment of VP22 to the Golgi and its packaging into virions. Interacts with gM (via C-terminus). Interacts with VP16; this interaction allows the formation of a tripartite complex composed of VP16, VP22 and UL41/VHS. According to a report interacts with gD (via C-terminus). According another publication, does not interact with gD. Interacts with host CGAS. Interacts with host SET; this interaction may interfere with SET-mediated nucleosomal deposition onto the viral genome. Interacts with the capsid-binding protein UL16. Post-translationally, highly phosphorylated in the host cell. Packaging is selective for underphosphorylated forms.

The protein resides in the virion tegument. Its subcellular location is the host cytoplasm. It is found in the host nucleus. It localises to the host Golgi apparatus. In terms of biological role, tegument protein that plays different roles during the time course of infection. Participates in both the accumulation of viral mRNAs and viral protein translation at late time of infection. Modulates the RNase activity of the virion host shutoff protein UL41 probably to ensure necessary levels of key cellular mRNAs and proteins. Plays a role in microtubule reorganization that occurs after viral infection by stabilizing microtubule network. Finally, may prevent nucleosomal deposition onto the viral genome by interacting with and inhibiting host SET. Plays a role in the inhibition of host innate immune system by targeting the CGAS enzymatic activity which is the principal cytosolic DNA sensor that detects invading viral DNA. Acts by mediating disruption of liquid-like droplets in which CGAS is activated, thereby preventing CGAS activity. The sequence is that of Tegument protein VP22 from Human herpesvirus 1 (strain 17) (HHV-1).